The chain runs to 160 residues: uncharacterized protein (160 aa).

A helical membrane pass occupies residues 47–67 (LLGGFANVAAILTPLVAVLAY).

It is found in the membrane. This is an uncharacterized protein from Sinorhizobium fredii (strain NBRC 101917 / NGR234).